Here is a 219-residue protein sequence, read N- to C-terminus: Protein Ac132 (219 aa).

A disordered region spans residues methionine 1–glutamine 34. Residues threonine 16 to glutamine 33 are compositionally biased toward basic and acidic residues. The segment at tyrosine 103–valine 134 is NEBU-like domain.

In terms of assembly, interacts with viral envelope protein E18 and the DNA-binding protein p6.9.

It is found in the host cytoplasm. It localises to the host nucleus. The protein localises to the virion. In terms of biological role, plays an essential role in nucleocapsid entry in host nucleus. May act by binding and stabilizing F-actin in the infected cell, which might attach to nucleocapsids and then push the nucleocapsids into the nucleus. This Autographa californica nuclear polyhedrosis virus (AcMNPV) protein is Protein Ac132 (Ac132).